The sequence spans 496 residues: Probable E3 ubiquitin-protein ligase XBOS32 (496 aa).

ANK repeat units follow at residues 50 to 79 (GRNS…EINL), 83 to 112 (RGQT…NVHR), 117 to 147 (NGGS…SMPN), 180 to 209 (GGLT…SVIE), and 223 to 252 (AGST…SLSA). The RING-type zinc-finger motif lies at 321-368 (CAVCLEGSCSVAAEGCKHEFCTRCALYLCSTSYTSVSPAGAIPCPLCR).

The enzyme catalyses S-ubiquitinyl-[E2 ubiquitin-conjugating enzyme]-L-cysteine + [acceptor protein]-L-lysine = [E2 ubiquitin-conjugating enzyme]-L-cysteine + N(6)-ubiquitinyl-[acceptor protein]-L-lysine.. Its pathway is protein modification; protein ubiquitination. This chain is Probable E3 ubiquitin-protein ligase XBOS32 (XBOS32), found in Oryza sativa subsp. japonica (Rice).